A 434-amino-acid chain; its full sequence is MSNFSPREIVSELDRFIIGQNDAKRAVAIALRNRWRRQQLEGQMREEVMPKNILMIGPTGVGKTEISRRLAKLAGAPFVKVEATKFTEVGYVGRDVEQIVRDLVEVAITLVREKRRDDVKAKAHLNAEERVLDALVGKTASPATRDSFRKKLRNGEMDDKEIEIEVADTGSGPSFEIPGMPGANIGVMNLSDMLGKAMGGRTKTRKTTVKDSYPILINDESDKLLDQDQIVQEALRVTEDEGIVFIDEIDKIASREGGMGAGVSREGVQRDLLPLVEGTTVATKYGPVKTDHVLFIASGAFHVSKPSDLLPELQGRLPIRVELNALTREDFRRILTETEASLIKQYIALMETEEVKLEITDDAIDALADIAVDLNATVENIGARRLQTVMERVLDEISYTAPDKTGATFVIDAAYVKDKIGSLAKNTDLSRFIL.

ATP-binding positions include isoleucine 18, glycine 60–glutamate 65, aspartate 247, glutamate 312, and arginine 384.

This sequence belongs to the ClpX chaperone family. HslU subfamily. A double ring-shaped homohexamer of HslV is capped on each side by a ring-shaped HslU homohexamer. The assembly of the HslU/HslV complex is dependent on binding of ATP.

It is found in the cytoplasm. Its function is as follows. ATPase subunit of a proteasome-like degradation complex; this subunit has chaperone activity. The binding of ATP and its subsequent hydrolysis by HslU are essential for unfolding of protein substrates subsequently hydrolyzed by HslV. HslU recognizes the N-terminal part of its protein substrates and unfolds these before they are guided to HslV for hydrolysis. This chain is ATP-dependent protease ATPase subunit HslU, found in Brucella anthropi (strain ATCC 49188 / DSM 6882 / CCUG 24695 / JCM 21032 / LMG 3331 / NBRC 15819 / NCTC 12168 / Alc 37) (Ochrobactrum anthropi).